The following is a 1025-amino-acid chain: MKFFALFIYRPVATILIAVAITLCGVLGFRLLPVAPLPQVDFPVIMISASLPGASPETMASSVATPLERSLGRIAGVNEMTSSSSLGSTRIILEFNFNRDINGAARDVQAAINAAQSLLPSGMPSRPTYRKANPSDAPIMILTLTSDTYSQGELYDFASTQLAQTIAQIDGVGDVDVGGSSLPAVRVGLNPEALFNQGVSLDDVRSAISNANVRKPQGAIEDSSHRWQIQTNDELKTAAEYQPLIIHYNNGAAVRLSDVASVTDSVQDVRNAGMTNAKPAILLMIRKLPEANIIQTVNSIRARLPELQETIPAAIDLQIAQDRSPTIRASLEEVEQTLVISIALVILVVFLFLRSGRATLIPAVAVPVSLIGTFAAMYLCGFSLNNLSLMALTIATGFVVDDAIVVLENISRHLEAGMKPLQASLQGTREVGFTVLSMSVSLVAVFLPLLLMGGLPGRLLREFAVTLSVAIGISLVISLTLTPMMCGWMLKRSKPHSQPRNKGFGRVLVAMQEGYGKSLKWVLNHTRIVGLVLVGTIALNVWMYITIPKTFFPEQDTGVLMGGIQADQSISFQAMRVKLQDFMKIIREDPAVDNVTGFTGGSRVNSGMMFITLKARGERNETAQQVIDRLRGKLAKEPGANLFLMAVQDIRVGGRQSNASYQYTLLSDDLAALREWEPKIRKALAAMPELADVNSDQQDNGAEMNLTYDRETMSRLGIDVAAANSLLNNAFGQRQISTIYQPMNQYKVVMEVDPRYTQDISALDKMYVINNDGKSIPLSYFASWQPANAPLSVNHQGLSAASTISFNLPTGSSLSEASDAINRTMTQLGVPSTVRGSFAGTAQVFQDTMNSQVILILAAIATVYIVLGILYESYVHPLTILSTLPSAGVGALLALELFDAPFSLIALIGIMLLIGIVKKNAIMMVDFALDAQRNGNMSPQDAIFQACILRFRPIMMTTLAALFGALPLVISSGDGSELRQPLGITIVGGLAMSQLLTLYTTPVVYLFFDRLRVRFSRKNRTTVTE.

Helical transmembrane passes span 3-23, 333-353, 360-380, 387-407, 431-451, 463-483, 528-548, 853-873, 875-895, 897-917, 953-973, and 984-1004; these read FFAL…AITL, EVEQ…FLFL, LIPA…MYLC, LSLM…IVVL, VGFT…PLLL, FAVT…TLTP, IVGL…ITIP, VILI…LYES, VHPL…LLAL, LFDA…IGIV, PIMM…ISSG, and ITIV…TPVV.

This sequence belongs to the resistance-nodulation-cell division (RND) (TC 2.A.6) family. MdtC subfamily. In terms of assembly, part of a tripartite efflux system composed of MdtA, MdtB and MdtC. MdtC forms a heteromultimer with MdtB.

It localises to the cell inner membrane. This chain is Multidrug resistance protein MdtC, found in Enterobacter sp. (strain 638).